The sequence spans 201 residues: 3-isopropylmalate dehydratase small subunit (201 aa).

Belongs to the LeuD family. LeuD type 1 subfamily. In terms of assembly, heterodimer of LeuC and LeuD.

The enzyme catalyses (2R,3S)-3-isopropylmalate = (2S)-2-isopropylmalate. It participates in amino-acid biosynthesis; L-leucine biosynthesis; L-leucine from 3-methyl-2-oxobutanoate: step 2/4. In terms of biological role, catalyzes the isomerization between 2-isopropylmalate and 3-isopropylmalate, via the formation of 2-isopropylmaleate. The chain is 3-isopropylmalate dehydratase small subunit from Afipia carboxidovorans (strain ATCC 49405 / DSM 1227 / KCTC 32145 / OM5) (Oligotropha carboxidovorans).